Here is a 530-residue protein sequence, read N- to C-terminus: UDP-glucuronosyltransferase 2B17 (530 aa).

The first 23 residues, 1 to 23, serve as a signal peptide directing secretion; the sequence is MPGKWISALLLLQISCCFRSVKC. Residues Asn-316 and Asn-483 are each glycosylated (N-linked (GlcNAc...) asparagine). The helical transmembrane segment at 494–510 threads the bilayer; the sequence is VIGFLLSCVATTIVLSV.

Belongs to the UDP-glycosyltransferase family.

It is found in the endoplasmic reticulum membrane. It catalyses the reaction glucuronate acceptor + UDP-alpha-D-glucuronate = acceptor beta-D-glucuronoside + UDP + H(+). It carries out the reaction 17alpha-estradiol + UDP-alpha-D-glucuronate = 17alpha-estradiol 3-O-(beta-D-glucuronate) + UDP + H(+). The catalysed reaction is 17alpha-estradiol + UDP-alpha-D-glucuronate = 17alpha-estradiol 17-O-(beta-D-glucuronate) + UDP + H(+). The enzyme catalyses 17beta-estradiol + UDP-alpha-D-glucuronate = 17beta-estradiol 17-O-(beta-D-glucuronate) + UDP + H(+). It catalyses the reaction 17beta-hydroxy-5alpha-androstan-3-one + UDP-alpha-D-glucuronate = 5alpha-dihydrotestosterone 17-O-(beta-D-glucuronate) + UDP + H(+). It carries out the reaction testosterone + UDP-alpha-D-glucuronate = testosterone 17-O-(beta-D-glucuronate) + UDP + H(+). UDP-glucuronosyltransferase (UGT) that catalyzes phase II biotransformation reactions in which lipophilic substrates are conjugated with glucuronic acid to increase the metabolite's water solubility, thereby facilitating excretion into either the urine or bile. Catalyzes the glucuronidation of endogenous steroid hormones such as androgens (epitestosterone, androsterone) and estrogens (estradiol, epiestradiol). The chain is UDP-glucuronosyltransferase 2B17 from Mus musculus (Mouse).